Consider the following 130-residue polypeptide: MAKVPSRSPRKRVRKQVADGMAHIHASFNNTIVTITDRQGNALSWATSGGSGFRGSRKSTPFAAQVAAERAGIAAQDYGLKNLEVFVKGPGPGRESAIRALNAVGYKITNITDVTPIPHNGCRPPKKRRV.

It belongs to the universal ribosomal protein uS11 family. Part of the 30S ribosomal subunit. Interacts with proteins S7 and S18. Binds to IF-3.

Its function is as follows. Located on the platform of the 30S subunit, it bridges several disparate RNA helices of the 16S rRNA. Forms part of the Shine-Dalgarno cleft in the 70S ribosome. The sequence is that of Small ribosomal subunit protein uS11 from Shewanella denitrificans (strain OS217 / ATCC BAA-1090 / DSM 15013).